Here is a 252-residue protein sequence, read N- to C-terminus: Imidazole glycerol phosphate synthase subunit HisF (252 aa).

Active-site residues include Asp11 and Asp130.

Belongs to the HisA/HisF family. Heterodimer of HisH and HisF.

Its subcellular location is the cytoplasm. The catalysed reaction is 5-[(5-phospho-1-deoxy-D-ribulos-1-ylimino)methylamino]-1-(5-phospho-beta-D-ribosyl)imidazole-4-carboxamide + L-glutamine = D-erythro-1-(imidazol-4-yl)glycerol 3-phosphate + 5-amino-1-(5-phospho-beta-D-ribosyl)imidazole-4-carboxamide + L-glutamate + H(+). Its pathway is amino-acid biosynthesis; L-histidine biosynthesis; L-histidine from 5-phospho-alpha-D-ribose 1-diphosphate: step 5/9. In terms of biological role, IGPS catalyzes the conversion of PRFAR and glutamine to IGP, AICAR and glutamate. The HisF subunit catalyzes the cyclization activity that produces IGP and AICAR from PRFAR using the ammonia provided by the HisH subunit. The sequence is that of Imidazole glycerol phosphate synthase subunit HisF from Bacillus velezensis (strain DSM 23117 / BGSC 10A6 / LMG 26770 / FZB42) (Bacillus amyloliquefaciens subsp. plantarum).